A 177-amino-acid polypeptide reads, in one-letter code: Inorganic pyrophosphatase (177 aa).

Substrate is bound by residues lysine 34, arginine 48, and tyrosine 60. Residues aspartate 70, aspartate 75, and aspartate 107 each contribute to the Mg(2+) site. Tyrosine 144 is a binding site for substrate.

Belongs to the PPase family. As to quaternary structure, homohexamer. The cofactor is Mg(2+).

The protein localises to the cytoplasm. The enzyme catalyses diphosphate + H2O = 2 phosphate + H(+). Catalyzes the hydrolysis of inorganic pyrophosphate (PPi) forming two phosphate ions. This chain is Inorganic pyrophosphatase, found in Picrophilus torridus (strain ATCC 700027 / DSM 9790 / JCM 10055 / NBRC 100828 / KAW 2/3).